Reading from the N-terminus, the 203-residue chain is Kunitz trypsin inhibitor 6 (203 aa).

A signal peptide spans 1–21 (MKTFQLMMISFLFVAITTTSG). Cys-70 and Cys-115 form a disulfide bridge. N-linked (GlcNAc...) asparagine glycosylation is found at Asn-94, Asn-127, Asn-136, Asn-144, and Asn-197.

The protein belongs to the protease inhibitor I3 (leguminous Kunitz-type inhibitor) family.

Its function is as follows. Exhibits Kunitz trypsin protease inhibitor activity. The sequence is that of Kunitz trypsin inhibitor 6 from Arabidopsis thaliana (Mouse-ear cress).